Reading from the N-terminus, the 396-residue chain is 8-amino-7-oxononanoate synthase (396 aa).

Substrate is bound at residue Arg29. Residue 116–117 coordinates pyridoxal 5'-phosphate; the sequence is GY. Substrate is bound at residue His141. Pyridoxal 5'-phosphate is bound by residues Ser187, His215, and Thr243. Lys246 carries the post-translational modification N6-(pyridoxal phosphate)lysine. Substrate is bound at residue Thr360.

This sequence belongs to the class-II pyridoxal-phosphate-dependent aminotransferase family. BioF subfamily. Homodimer. Pyridoxal 5'-phosphate is required as a cofactor.

The catalysed reaction is 6-carboxyhexanoyl-[ACP] + L-alanine + H(+) = (8S)-8-amino-7-oxononanoate + holo-[ACP] + CO2. Its pathway is cofactor biosynthesis; biotin biosynthesis. Its function is as follows. Catalyzes the decarboxylative condensation of pimeloyl-[acyl-carrier protein] and L-alanine to produce 8-amino-7-oxononanoate (AON), [acyl-carrier protein], and carbon dioxide. The protein is 8-amino-7-oxononanoate synthase of Nitrosospira multiformis (strain ATCC 25196 / NCIMB 11849 / C 71).